The following is a 219-amino-acid chain: Phosphatidylinositol phosphate synthase (219 aa).

Position 29-32 (29-32 (NQLT)) interacts with a CDP-1,2-diacyl-sn-glycerol. The next 2 helical transmembrane spans lie at 31-47 (LTLV…LLLI) and 53-72 (IWAA…DGTV). 2 residues coordinate Mg(2+): Asp66 and Asp69. Positions 70, 74, and 80 each coordinate a CDP-1,2-diacyl-sn-glycerol. Positions 87 and 91 each coordinate Mg(2+). Residue Asp91 is the Proton acceptor of the active site. 4 consecutive transmembrane segments (helical) span residues 93-110 (ITDG…VYSY), 116-133 (LVAA…ISYV), 154-171 (RLIV…GVPY), and 177-194 (LWAL…RLVM).

The protein belongs to the CDP-alcohol phosphatidyltransferase class-I family. Homodimer. The cofactor is Mg(2+).

It is found in the cell membrane. It catalyses the reaction a CDP-1,2-diacyl-sn-glycerol + 1D-myo-inositol 3-phosphate = a 1,2-diacyl-sn-glycero-3-phospho-(1D-myo-inositol-3-phosphate) + CMP + H(+). The enzyme catalyses 1,2-di-(9Z-octadecenoyl)-sn-glycero-3-cytidine-5'-diphosphate + 1D-myo-inositol 3-phosphate = 1,2-di-(9Z-octadecenoyl)-sn-glycero-3-phospho-(1D-myo-inositol-3-phosphate) + CMP + H(+). The protein operates within phospholipid metabolism; phosphatidylinositol phosphate biosynthesis. Catalyzes the conjugation of the 1'-hydroxyl group of D-myo-inositol-3-phosphate (also named L-myo-inositol-1-phosphate) with a lipid tail of cytidine diphosphate diacylglycerol (CDP-DAG), forming phosphatidylinositol phosphate (PIP) and CMP. PIP is a precursor of phosphatidylinositol (PI) which is an essential lipid required for cell wall formation. In Corynebacterium glutamicum (strain ATCC 13032 / DSM 20300 / JCM 1318 / BCRC 11384 / CCUG 27702 / LMG 3730 / NBRC 12168 / NCIMB 10025 / NRRL B-2784 / 534), this protein is Phosphatidylinositol phosphate synthase.